The sequence spans 411 residues: tRNA (uracil(54)-C(5))-methyltransferase (411 aa).

Cys62, Cys68, Cys71, and Cys138 together coordinate [4Fe-4S] cluster. Residues Gln254, Tyr280, Thr285, 301 to 302, Asp328, and Asp342 each bind S-adenosyl-L-methionine; that span reads DS. Cys369 functions as the Nucleophile in the catalytic mechanism. Glu402 acts as the Proton acceptor in catalysis.

This sequence belongs to the class I-like SAM-binding methyltransferase superfamily. RNA M5U methyltransferase family.

The enzyme catalyses uridine(54) in tRNA + S-adenosyl-L-methionine = 5-methyluridine(54) in tRNA + S-adenosyl-L-homocysteine + H(+). Functionally, catalyzes the formation of 5-methyl-uridine at position 54 (m5U54) in tRNA. The polypeptide is tRNA (uracil(54)-C(5))-methyltransferase (Pyrococcus furiosus (strain ATCC 43587 / DSM 3638 / JCM 8422 / Vc1)).